A 546-amino-acid chain; its full sequence is 3-(3-hydroxy-phenyl)propionate/3-hydroxycinnamic acid hydroxylase 2 (546 aa).

FAD contacts are provided by residues 10–39 and 278–288; these read SVAI…VVER and FVAGRIALVGD.

It belongs to the PheA/TfdB FAD monooxygenase family. Requires FAD as cofactor.

It carries out the reaction 3-(3-hydroxyphenyl)propanoate + NADH + O2 + H(+) = 3-(2,3-dihydroxyphenyl)propanoate + NAD(+) + H2O. The catalysed reaction is (2E)-3-(3-hydroxyphenyl)prop-2-enoate + NADH + O2 + H(+) = (2E)-3-(2,3-dihydroxyphenyl)prop-2-enoate + NAD(+) + H2O. It functions in the pathway aromatic compound metabolism; 3-phenylpropanoate degradation. Its function is as follows. Catalyzes the insertion of one atom of molecular oxygen into position 2 of the phenyl ring of 3-(3-hydroxyphenyl)propionate (3-HPP) and hydroxycinnamic acid (3HCI). In Burkholderia vietnamiensis (strain G4 / LMG 22486) (Burkholderia cepacia (strain R1808)), this protein is 3-(3-hydroxy-phenyl)propionate/3-hydroxycinnamic acid hydroxylase 2.